Consider the following 417-residue polypeptide: Hydroxysteroid dehydrogenase-like protein 2 (417 aa).

NADP(+) is bound by residues 17–23 (GASRGIG), Lys-42, and Asp-74. Tyr-168 serves as the catalytic Proton acceptor. Lys-172 contacts NADP(+). The 109-residue stretch at 306 to 414 (SSPLQETFKA…KLEKILGQMN (109 aa)) folds into the SCP2 domain.

It belongs to the short-chain dehydrogenases/reductases (SDR) family.

It localises to the peroxisome. It is found in the mitochondrion. Has apparently no steroid dehydrogenase activity. Might act as a metabolic regulator that affects systemic adaptation to nutritional cues. This Xenopus tropicalis (Western clawed frog) protein is Hydroxysteroid dehydrogenase-like protein 2 (hsdl2).